Here is a 118-residue protein sequence, read N- to C-terminus: HTH-type transcriptional regulator SarT (118 aa).

The H-T-H motif DNA-binding region spans 55-78 (MRDIISYIGIDQSRIVKSVKELSK).

This sequence belongs to the SarA family.

It is found in the cytoplasm. Functionally, transcriptional regulator acting as an intermediary between major regulators SarA and agr and virulence genes. Represses alpha-hemolysin (hla) gene expression. This is HTH-type transcriptional regulator SarT (sarT) from Staphylococcus aureus (strain Mu50 / ATCC 700699).